An 894-amino-acid chain; its full sequence is Cell wall-associated protease (894 aa).

The N-terminal stretch at 1–31 (MKRRKFSSVVAAVLIFALIFSLFSPGTKAAA) is a signal peptide. Residues 422 to 729 (QWPLKNNGEN…YGRLNVMKAV (308 aa)) form the Peptidase S8 domain. Catalysis depends on charge relay system residues Asp-462, His-497, and Ser-650.

The protein belongs to the peptidase S8 family. In terms of processing, proteolytically cleaved to yield CWBP23 and CWBP52.

Its subcellular location is the secreted. It localises to the cell wall. Its activity is regulated as follows. Inhibited by PMSF. CWBP52 is a serine-type protease that could be involved in proteoglycan peptide bridges. This chain is Cell wall-associated protease (wprA), found in Bacillus subtilis (strain 168).